The following is a 1136-amino-acid chain: Mitochondrial 3' processome subunit 3 (1136 aa).

A mitochondrion-targeting transit peptide spans 1–97 (MKKAWAQLER…RGLVCTTVGD (97 aa)).

As to quaternary structure, component of the mitochondrial 3' processome (MPsome) complex composed at least of terminal uridylyltransferase KRET1/TUT1, 3'-5' exonuclease DSS1, MPSS1, MPSS2 and MPSS3. Within the complex, interacts with KRET1.

It localises to the mitochondrion. Functionally, as part of the mitochondrial 3' processome (MPsome), involved in the maturation of guided RNA (gRNA) precursors. The sequence is that of Mitochondrial 3' processome subunit 3 from Trypanosoma brucei brucei.